The chain runs to 148 residues: Deoxyuridine 5'-triphosphate nucleotidohydrolase (148 aa).

Residues 67–69 (RSG), Asn-80, 84–86 (LID), and Met-94 each bind substrate.

Belongs to the dUTPase family. Requires Mg(2+) as cofactor.

It catalyses the reaction dUTP + H2O = dUMP + diphosphate + H(+). The protein operates within pyrimidine metabolism; dUMP biosynthesis; dUMP from dCTP (dUTP route): step 2/2. This enzyme is involved in nucleotide metabolism: it produces dUMP, the immediate precursor of thymidine nucleotides and it decreases the intracellular concentration of dUTP so that uracil cannot be incorporated into DNA. The chain is Deoxyuridine 5'-triphosphate nucleotidohydrolase from Burkholderia mallei (strain NCTC 10247).